A 926-amino-acid polypeptide reads, in one-letter code: Sperm-associated antigen 1 (926 aa).

3 TPR repeats span residues 209–242, 244–275, and 276–309; these read ATRE…LPTV, AYNN…EPGN, and VKAL…EPDN. Residues 318–452 are disordered; sequence EVERDLKNSE…ENPAGLKSQG (135 aa). A phosphoserine mark is found at serine 347 and serine 354. Over residues 352 to 368 the composition is skewed to basic and acidic residues; the sequence is GKSGRKHEDGGGDKKPA. A compositionally biased stretch (low complexity) spans 369–379; it reads EPAGAARAAQP. Serine 423 bears the Phosphoserine mark. The segment covering 428–441 has biased composition (gly residues); sequence AGGGATGHPGGGQG. TPR repeat units lie at residues 445–478, 487–520, 522–554, 623–656, 657–690, and 692–724; these read PAGL…LEPA, SILY…HPFS, KPLL…DCGL, FKAL…NNKE, CAIY…ADGN, and KAFY…DPSI. Composition is skewed to basic and acidic residues over residues 758 to 769 and 784 to 799; these read IQEVNEGKEEPG and KGGK…EKLP. Residues 758–801 are disordered; that stretch reads IQEVNEGKEEPGRPAGEVSMGCLASEKGGKSSRSPEDPEKLPIA. 781 to 788 contacts GTP; the sequence is ASEKGGKS. Residue serine 791 is modified to Phosphoserine.

In terms of tissue distribution, present in most tissues, including lung, with the strongest expression in brain, colon, kidney, and testis. In sperm and testis, detected in particular in pachytene primary spermatocytes. Up-regulated in pancreatic tumor tissues and not in normal pancreatic tissue.

Its subcellular location is the cytoplasm. It localises to the dynein axonemal particle. Its function is as follows. May play a role in the cytoplasmic assembly of the ciliary dynein arms. May play a role in fertilization. Binds GTP and has GTPase activity. The polypeptide is Sperm-associated antigen 1 (SPAG1) (Homo sapiens (Human)).